A 211-amino-acid polypeptide reads, in one-letter code: Holliday junction branch migration complex subunit RuvA (211 aa).

Positions 1 to 70 (MIQFLQGQVV…QDQIALFGFG (70 aa)) are domain I. Residues 71-149 (RLAERDLFGQ…QWHKLQMGTG (79 aa)) are domain II. Residues 150–158 (ETDSTLPTT) are flexible linker. Residues 158 to 211 (TALLEDLEMTLLALGYTQTEIQQAIAMVSQVPDVAQSEDPEVWIRQAIGWLSDH) form a domain III region.

The protein belongs to the RuvA family. As to quaternary structure, homotetramer. Forms an RuvA(8)-RuvB(12)-Holliday junction (HJ) complex. HJ DNA is sandwiched between 2 RuvA tetramers; dsDNA enters through RuvA and exits via RuvB. An RuvB hexamer assembles on each DNA strand where it exits the tetramer. Each RuvB hexamer is contacted by two RuvA subunits (via domain III) on 2 adjacent RuvB subunits; this complex drives branch migration. In the full resolvosome a probable DNA-RuvA(4)-RuvB(12)-RuvC(2) complex forms which resolves the HJ.

Its subcellular location is the cytoplasm. Functionally, the RuvA-RuvB-RuvC complex processes Holliday junction (HJ) DNA during genetic recombination and DNA repair, while the RuvA-RuvB complex plays an important role in the rescue of blocked DNA replication forks via replication fork reversal (RFR). RuvA specifically binds to HJ cruciform DNA, conferring on it an open structure. The RuvB hexamer acts as an ATP-dependent pump, pulling dsDNA into and through the RuvAB complex. HJ branch migration allows RuvC to scan DNA until it finds its consensus sequence, where it cleaves and resolves the cruciform DNA. The polypeptide is Holliday junction branch migration complex subunit RuvA (Synechocystis sp. (strain ATCC 27184 / PCC 6803 / Kazusa)).